The following is a 510-amino-acid chain: GTPase Der (510 aa).

EngA-type G domains follow at residues 3-166 (PVVA…ATAL) and 220-393 (IKIA…ACAT). Residues 9–16 (GRPNVGKS), 56–60 (DTGGI), 118–121 (NKTD), 226–233 (GRPNVGKS), 273–277 (DTAGV), and 338–341 (NKWD) each bind GTP. Residues 394–478 (QKTSTSMLTR…PIRIQFQEGN (85 aa)) enclose the KH-like domain.

Belongs to the TRAFAC class TrmE-Era-EngA-EngB-Septin-like GTPase superfamily. EngA (Der) GTPase family. In terms of assembly, associates with the 50S ribosomal subunit.

GTPase that plays an essential role in the late steps of ribosome biogenesis. The polypeptide is GTPase Der (Haemophilus ducreyi (strain 35000HP / ATCC 700724)).